A 419-amino-acid polypeptide reads, in one-letter code: MSFIPVAEDSDFPIHNLPYGVFSTRGDPRPRIGVAIGDQILDLSIIKHLFTGPVLSKHQDVFNQPTLNSFMGLGQAAWKEARVFLQNLLSVSQARLRDDTELRKCAFISQASATMHLPATIGDYTDFYSSRQHATNVGIMFRDKENALMPNWLHLPVGYHGRASSVVVSGTPIRRPMGQMKPDDSKPPVYGACKLLDMELEMAFFVGPGNRLGEPIPISKAHEHIFGMVLMNDWSARDIQKWEYVPLGPFLGKSFGTTVSPWVVPMDALMPFAVPNPKQDPRPLPYLCHDEPYTFDINLSVNLKGEGMSQAATICKSNFKYMYWTMLQQLTHHSVNGCNLRPGDLLASGTISGPEPENFGSMLELSWKGTKPIDLGNGQTRKFLLDGDEVIITGYCQGDGYRIGFGQCAGKVLPALLPS.

The residue at position 2 (Ser2) is an N-acetylserine. A Phosphoserine modification is found at Ser92. Asp126 lines the Ca(2+) pocket. Tyr128 is a binding site for substrate. Catalysis depends on His133, which acts as the Proton acceptor. Arg142 is a substrate binding site. Residues Glu199, Glu201, and Asp233 each contribute to the Ca(2+) site. Asp233 serves as a coordination point for Mg(2+). The substrate site is built by Gln240 and Tyr244. Residues Lys253 and Thr257 each coordinate Mg(2+). Ser309 carries the phosphoserine modification. Thr350 provides a ligand contact to substrate. Tyr395 is modified (phosphotyrosine).

It belongs to the FAH family. As to quaternary structure, homodimer. Ca(2+) serves as cofactor. It depends on Mg(2+) as a cofactor. Mainly expressed in liver and kidney. Lower levels are also detected in many other tissues.

The enzyme catalyses 4-fumarylacetoacetate + H2O = acetoacetate + fumarate + H(+). It participates in amino-acid degradation; L-phenylalanine degradation; acetoacetate and fumarate from L-phenylalanine: step 6/6. This chain is Fumarylacetoacetase (FAH), found in Homo sapiens (Human).